The following is a 136-amino-acid chain: Histone H3 (136 aa).

Positions M1 to K43 are disordered. An N6,N6,N6-trimethyllysine; alternate modification is found at K5. K5 bears the N6,N6-dimethyllysine; alternate mark. K5 and K10 each carry N6-methyllysine; alternate. Position 10 is an N6-acetyllysine; alternate (K10). Position 11 is a phosphoserine (S11). At K15 the chain carries N6,N6-dimethyllysine; alternate. Residues K15, K19, K24, K28, and K37 each carry the N6-methyllysine; alternate modification. K15, K19, K24, K28, and K37 each carry N6-acetyllysine; alternate. N6,N6,N6-trimethyllysine; alternate occurs at positions 28 and 37. 2 positions are modified to N6,N6-dimethyllysine; alternate: K28 and K37. N6-acetyllysine occurs at positions 57 and 65. K80 is subject to N6,N6,N6-trimethyllysine; alternate. K80 bears the N6,N6-dimethyllysine; alternate mark. An N6-methyllysine; alternate modification is found at K80.

Belongs to the histone H3 family. As to quaternary structure, the nucleosome is a histone octamer containing two molecules each of H2A, H2B, H3 and H4 assembled in one H3-H4 heterotetramer and two H2A-H2B heterodimers. The octamer wraps approximately 147 bp of DNA. Phosphorylated by IPL1 to form H3S10ph. H3S10ph promotes subsequent H3K14ac formation by GCN5 and is required for transcriptional activation through TBP recruitment to the promoters. In terms of processing, mono-, di- and trimethylated by the COMPASS complex to form H3K4me1/2/3. H3K4me activates gene expression by regulating transcription elongation and plays a role in telomere length maintenance. H3K4me enrichment correlates with transcription levels, and occurs in a 5' to 3' gradient with H3K4me3 enrichment at the 5'-end of genes, shifting to H3K4me2 and then H3K4me1. Methylated by SET2 to form H3K36me. H3K36me represses gene expression. Methylated by DOT1 to form H3K79me. H3K79me is required for association of SIR proteins with telomeric regions and for telomeric silencing. The COMPASS-mediated formation of H3K4me2/3 and the DOT1-mediated formation of H3K79me require H2BK123ub1. Post-translationally, acetylation of histone H3 leads to transcriptional activation. H3K14ac formation by GCN5 is promoted by H3S10ph. H3K14ac can also be formed by ESA1. H3K56ac formation occurs predominantly in newly synthesized H3 molecules during G1, S and G2/M of the cell cycle and may be involved in DNA repair.

It is found in the nucleus. It localises to the chromosome. Functionally, core component of nucleosome. Nucleosomes wrap and compact DNA into chromatin, limiting DNA accessibility to the cellular machineries which require DNA as a template. Histones thereby play a central role in transcription regulation, DNA repair, DNA replication and chromosomal stability. DNA accessibility is regulated via a complex set of post-translational modifications of histones, also called histone code, and nucleosome remodeling. In Candida glabrata (strain ATCC 2001 / BCRC 20586 / JCM 3761 / NBRC 0622 / NRRL Y-65 / CBS 138) (Yeast), this protein is Histone H3 (HHT1).